The sequence spans 197 residues: Elongation factor Ts (197 aa).

The tract at residues 81 to 84 is involved in Mg(2+) ion dislocation from EF-Tu; that stretch reads TDFV.

This sequence belongs to the EF-Ts family.

It is found in the cytoplasm. In terms of biological role, associates with the EF-Tu.GDP complex and induces the exchange of GDP to GTP. It remains bound to the aminoacyl-tRNA.EF-Tu.GTP complex up to the GTP hydrolysis stage on the ribosome. The protein is Elongation factor Ts of Petrotoga mobilis (strain DSM 10674 / SJ95).